The primary structure comprises 326 residues: N-(2-amino-2-carboxyethyl)-L-glutamate synthase (326 aa).

Lys47 carries the N6-(pyridoxal phosphate)lysine modification. Residues Asn77, 185-189 (STTGS), and Ser272 contribute to the pyridoxal 5'-phosphate site.

Belongs to the cysteine synthase/cystathionine beta-synthase family. SbnA subfamily. In terms of assembly, homodimer. The cofactor is pyridoxal 5'-phosphate.

It carries out the reaction O-phospho-L-serine + L-glutamate = N-[(2S)-2-amino-2-carboxyethyl]-L-glutamate + phosphate + H(+). Its pathway is siderophore biosynthesis. Catalyzes the synthesis of N-((2S)-2-amino-2-carboxyethyl)-L-glutamate (ACEGA) from O-phospho-L-serine and L-glutamate. Involved in the biosynthesis of L-2,3-diaminopropionic acid (L-Dap), a precursor of staphyloferrin B and antibiotics. This is N-(2-amino-2-carboxyethyl)-L-glutamate synthase (sbnA) from Staphylococcus aureus (strain N315).